Consider the following 131-residue polypeptide: Small ribosomal subunit protein bS6 (131 aa).

Residues 98-131 (EASPMVKAKDERRERREDFANETADDSEAGDSEE) are disordered. The span at 104-116 (KAKDERRERREDF) shows a compositional bias: basic and acidic residues. Residues 120–131 (TADDSEAGDSEE) are compositionally biased toward acidic residues.

This sequence belongs to the bacterial ribosomal protein bS6 family.

In terms of biological role, binds together with bS18 to 16S ribosomal RNA. In Klebsiella pneumoniae subsp. pneumoniae (strain ATCC 700721 / MGH 78578), this protein is Small ribosomal subunit protein bS6.